The primary structure comprises 381 residues: MIISASTDYRAAAQRKLPPFLFHYIDGGAYNEQTLRRNTADLADIALRQRVLKNMSELSLETQLFGETQAMPVVLGPVGLSGMYARRGEVQAARAADKKGIPFTLSTLSVCPIEEVAPAIARPMWFQLYVLKDRGFMRNALTRAQAAGVKTLVFTVDMPVPGARYRDAHSGMSGPNAAARRLLQAIAHPQWAWDVGLNGKPHDLGNISAYLGKPTTLEDYMGWIATNFDPSISWKDLEWVREFWQGPMIIKGILDPEDAKDAVKFGADGIVVSNHGGRQLDGVLSTARALPAIADAVKGDITILADSGIRTGLDVVRMIALGADSVLLGRAFVYALATAGEAGVINLLTLIEQEMRVAMTLTGAKRIADINRDSLAVSERG.

The FMN hydroxy acid dehydrogenase domain maps to Met-1–Arg-380. Tyr-24 contributes to the substrate binding site. 2 residues coordinate FMN: Ser-106 and Gln-127. Tyr-129 contributes to the substrate binding site. An FMN-binding site is contributed by Thr-155. Position 164 (Arg-164) interacts with substrate. FMN is bound at residue Lys-251. His-275 functions as the Proton acceptor in the catalytic mechanism. Position 278 (Arg-278) interacts with substrate. Asp-306–Arg-330 is a binding site for FMN.

This sequence belongs to the FMN-dependent alpha-hydroxy acid dehydrogenase family. The cofactor is FMN.

The protein localises to the cell inner membrane. It catalyses the reaction (S)-lactate + A = pyruvate + AH2. In terms of biological role, catalyzes the conversion of L-lactate to pyruvate. Is coupled to the respiratory chain. This is L-lactate dehydrogenase from Yersinia pseudotuberculosis serotype O:1b (strain IP 31758).